The following is a 198-amino-acid chain: Recombination protein RecR (198 aa).

The C4-type zinc-finger motif lies at 57 to 72 (CSICGNLTDQDPCAIC). Residues 80–175 (STILIVEDSR…KVTRLARGLA (96 aa)) enclose the Toprim domain.

This sequence belongs to the RecR family.

Functionally, may play a role in DNA repair. It seems to be involved in an RecBC-independent recombinational process of DNA repair. It may act with RecF and RecO. This Streptococcus suis (strain 05ZYH33) protein is Recombination protein RecR.